A 159-amino-acid polypeptide reads, in one-letter code: MNDQIPMTILGVEKLRKELEMLKTIKRPKIIKSIIEARQHGDLKENSEYHAAREEQGFCEGRIKEIELKLSKARIIDITKVKNNGVIIFGSTVTILNLTSNQEFTYRIVGDDESNFKRKLISINSPMSRGLVGKKVSDVATIKTPVGDVKYKILKIEYN.

The protein belongs to the GreA/GreB family.

Necessary for efficient RNA polymerase transcription elongation past template-encoded arresting sites. The arresting sites in DNA have the property of trapping a certain fraction of elongating RNA polymerases that pass through, resulting in locked ternary complexes. Cleavage of the nascent transcript by cleavage factors such as GreA or GreB allows the resumption of elongation from the new 3'terminus. GreA releases sequences of 2 to 3 nucleotides. This Buchnera aphidicola subsp. Baizongia pistaciae (strain Bp) protein is Transcription elongation factor GreA.